A 117-amino-acid chain; its full sequence is MTVVTCVFLDHVHHDPAQGDSLIADVTSFLFGQVAGVVQSCVSDQLTAAGDLGLPRGHRLVEPSSRLQGKAIMVALPEDRWHVLTCEHTLEPVAFHLSHVLHESQQRHRRGRRRSKP.

This chain is Mini-circle uncharacterized 12.9 kDa protein, found in Streptomyces coelicolor (strain ATCC BAA-471 / A3(2) / M145).